The sequence spans 445 residues: MAERNEQILTPSQLNALARDLLEGSFPLVWVEAELSSVTRPSSGHLYFTLKDARAQIRCAMFKPKSTWLKFQPREGLRVLARGRLTLYEARGDYQLVLDHMEEAGEGALRRAFDALRARLAAEGLFDAERKQLLPAHVQRLAVITSPSGAAVRDVLSVLARRFPLLEVDLLPSLVQGDSAAAQITSLLQRADASGRYDVILITRGGGSLEDLWAFNDERLARAIAAAQTPVVSAVGHETDFSLSDFVADVRAPTPSVAAELLVPDQRELVPRVRRAQARMTQLQQHALGNAMQRADRLALRLRAHSPQARLQLLHRRQEEAGRQLGARMTQVLERLQARVQRGHAQVQSHNPQRHLAGLQQRLRALHPQAAMQRRLQHDQLQLRSIARSLEAVNPLATVARGYAIVTRPADGSVVRSAAEVAAGERLRAQLADGSIEVRVEPGER.

The protein belongs to the XseA family. Heterooligomer composed of large and small subunits.

It is found in the cytoplasm. The enzyme catalyses Exonucleolytic cleavage in either 5'- to 3'- or 3'- to 5'-direction to yield nucleoside 5'-phosphates.. Bidirectionally degrades single-stranded DNA into large acid-insoluble oligonucleotides, which are then degraded further into small acid-soluble oligonucleotides. This is Exodeoxyribonuclease 7 large subunit from Xanthomonas oryzae pv. oryzae (strain PXO99A).